A 231-amino-acid chain; its full sequence is DNA mismatch repair protein MutH (231 aa).

The protein belongs to the MutH family.

Its subcellular location is the cytoplasm. Sequence-specific endonuclease that cleaves unmethylated GATC sequences. It is involved in DNA mismatch repair. The chain is DNA mismatch repair protein MutH from Salmonella typhi.